We begin with the raw amino-acid sequence, 213 residues long: Redox-sensing transcriptional repressor Rex (213 aa).

The H-T-H motif DNA-binding region spans 16-55; that stretch reads IYYRYLRLLSNSGKNRVSSTELAEAVKVDSATIRRDFSYF. Position 90 to 95 (90 to 95) interacts with NAD(+); sequence GVGNLG.

Belongs to the transcriptional regulatory Rex family. Homodimer.

Its subcellular location is the cytoplasm. In terms of biological role, modulates transcription in response to changes in cellular NADH/NAD(+) redox state. This is Redox-sensing transcriptional repressor Rex from Ligilactobacillus salivarius (strain UCC118) (Lactobacillus salivarius).